Consider the following 269-residue polypeptide: Putative pyruvate, phosphate dikinase regulatory protein (269 aa).

Residue 147–154 (GVSRTSKT) participates in ADP binding.

This sequence belongs to the pyruvate, phosphate/water dikinase regulatory protein family. PDRP subfamily.

It carries out the reaction N(tele)-phospho-L-histidyl/L-threonyl-[pyruvate, phosphate dikinase] + ADP = N(tele)-phospho-L-histidyl/O-phospho-L-threonyl-[pyruvate, phosphate dikinase] + AMP + H(+). The enzyme catalyses N(tele)-phospho-L-histidyl/O-phospho-L-threonyl-[pyruvate, phosphate dikinase] + phosphate + H(+) = N(tele)-phospho-L-histidyl/L-threonyl-[pyruvate, phosphate dikinase] + diphosphate. Its function is as follows. Bifunctional serine/threonine kinase and phosphorylase involved in the regulation of the pyruvate, phosphate dikinase (PPDK) by catalyzing its phosphorylation/dephosphorylation. In Geotalea daltonii (strain DSM 22248 / JCM 15807 / FRC-32) (Geobacter daltonii), this protein is Putative pyruvate, phosphate dikinase regulatory protein.